A 181-amino-acid chain; its full sequence is CAPA peptides (181 aa).

A signal peptide spans M1 to G22. Positions Q23–D29 are excised as a propeptide. Isoleucine amide is present on I41. The propeptide occupies N44–E54. Isoleucine amide is present on I65. A propeptide spanning residues S68–L181 is cleaved from the precursor. Positions T159 to L181 are disordered. Basic and acidic residues predominate over residues L169–L181.

Post-translationally, a pyrokinin potentially constituted by residues Asn-158 to Gly-170 has so far not been detected and might be completely absent in ants. As to expression, periviscerokinin 1 and 2 are expressed in central brain, antennal lobes and gnathal, thoracic and abominal ganglia. Periviscerokinin 2 is also expressed in the retrocerebral complex (at protein level).

It localises to the secreted. Functionally, periviscerokinins mediate visceral muscle contractile activity (myotropic activity). The chain is CAPA peptides from Camponotus floridanus (Florida carpenter ant).